The following is a 592-amino-acid chain: ATP-binding protein Uup (592 aa).

2 consecutive ABC transporter domains span residues 1–221 (MPLI…RIEK) and 289–516 (FKLK…KSNI). ATP contacts are provided by residues 36 to 43 (GKNGAGKS) and 321 to 328 (GNNGSGKS). Residues 516-550 (ISFLKTKQNQVKKELKKVLNEIEKIENSIKTLKIQ) adopt a coiled-coil conformation. The interval 518-592 (FLKTKQNQVK…IYWENLEKKL (75 aa)) is C-terminal domain (CTD), binds DNA.

The protein belongs to the ABC transporter superfamily. ABCF family. Uup subfamily.

It localises to the cytoplasm. It catalyses the reaction ATP + H2O = ADP + phosphate + H(+). Functionally, probably plays a role in ribosome assembly or function. May be involved in resolution of branched DNA intermediates that result from template switching in postreplication gaps. Binds DNA and has ATPase activity. The protein is ATP-binding protein Uup of Buchnera aphidicola subsp. Schizaphis graminum (strain Sg).